The sequence spans 469 residues: Cyclin-dependent kinase 14 (469 aa).

A phosphoserine mark is found at Ser24, Ser78, and Ser95. Residues 103–133 are disordered; the sequence is FKTSSTGKESPKVRRHSSPSSPTSPKFGKAD. Ser134 bears the Phosphoserine mark. Residues 135 to 419 enclose the Protein kinase domain; the sequence is YEKLEKLGEG…AQAALSHEYF (285 aa). ATP is bound by residues 141–149 and Lys164; that span reads LGEGSYATV. Asp256 serves as the catalytic Proton acceptor. The segment at 449–469 is disordered; sequence ESMRAFGKNNSYGKSLSNSKH. Over residues 456–469 the composition is skewed to polar residues; that stretch reads KNNSYGKSLSNSKH.

This sequence belongs to the protein kinase superfamily. CMGC Ser/Thr protein kinase family. CDC2/CDKX subfamily. In terms of assembly, found in a complex with LRP6, CCNY and CAPRIN2 during G2/M stage; CAPRIN2 functions as a scaffold for the complex by binding to CCNY via its N terminus and to CDK14 via its C terminus. Interacts with CCNY; CCNY mediates its recruitment to the plasma membrane and promotes phosphorylation of LRP6. Interacts with CCDN3 and CDKN1A. Interacts with SEPT8. Interacts with 14-3-3 proteina YWHAB, YWHAE, YWHAH and YWHAQ. In terms of tissue distribution, highly expressed in brain, pancreas, kidney, heart, testis and ovary. Also detected at lower levels in other tissues except in spleen and thymus where expression is barely detected.

It localises to the cell membrane. The protein localises to the cytoplasm. It is found in the nucleus. It catalyses the reaction L-seryl-[protein] + ATP = O-phospho-L-seryl-[protein] + ADP + H(+). It carries out the reaction L-threonyl-[protein] + ATP = O-phospho-L-threonyl-[protein] + ADP + H(+). Serine/threonine-protein kinase activity is promoted by associated cyclins CCDN3 and CCNY and repressed by CDKN1A. Functionally, serine/threonine-protein kinase involved in the control of the eukaryotic cell cycle, whose activity is controlled by an associated cyclin. Acts as a cell-cycle regulator of Wnt signaling pathway during G2/M phase by mediating the phosphorylation of LRP6 at 'Ser-1490', leading to the activation of the Wnt signaling pathway. Acts as a regulator of cell cycle progression and cell proliferation via its interaction with CCDN3. Phosphorylates RB1 in vitro, however the relevance of such result remains to be confirmed in vivo. May also play a role in meiosis, neuron differentiation and may indirectly act as a negative regulator of insulin-responsive glucose transport. The sequence is that of Cyclin-dependent kinase 14 (CDK14) from Homo sapiens (Human).